A 477-amino-acid polypeptide reads, in one-letter code: V-type ATP synthase beta chain (477 aa).

Belongs to the ATPase alpha/beta chains family.

Functionally, produces ATP from ADP in the presence of a proton gradient across the membrane. The V-type beta chain is a regulatory subunit. The protein is V-type ATP synthase beta chain of Anaeromyxobacter sp. (strain K).